A 141-amino-acid chain; its full sequence is uncharacterized protein (141 aa).

Transmembrane regions (helical) follow at residues L32–I52, I69–F89, and F109–Y129.

It localises to the cell membrane. This is an uncharacterized protein from Methanocaldococcus jannaschii (strain ATCC 43067 / DSM 2661 / JAL-1 / JCM 10045 / NBRC 100440) (Methanococcus jannaschii).